Consider the following 90-residue polypeptide: Small ribosomal subunit protein bS16 (90 aa).

Belongs to the bacterial ribosomal protein bS16 family.

The chain is Small ribosomal subunit protein bS16 from Streptococcus agalactiae serotype III (strain NEM316).